Here is a 329-residue protein sequence, read N- to C-terminus: Eukaryotic translation initiation factor 3 subunit I (329 aa).

WD repeat units lie at residues 8–47 (GHQR…RLGT), 50–89 (GHGG…NIAT), 145–184 (ITDS…KIHS), 187–226 (EHTH…LLKE), and 284–323 (GHFG…FDYT).

The protein belongs to the eIF-3 subunit I family. Component of the eukaryotic translation initiation factor 3 (eIF-3) complex.

The protein localises to the cytoplasm. Its function is as follows. Component of the eukaryotic translation initiation factor 3 (eIF-3) complex, which is involved in protein synthesis of a specialized repertoire of mRNAs and, together with other initiation factors, stimulates binding of mRNA and methionyl-tRNAi to the 40S ribosome. The eIF-3 complex specifically targets and initiates translation of a subset of mRNAs involved in cell proliferation. This is Eukaryotic translation initiation factor 3 subunit I from Bombyx mori (Silk moth).